The primary structure comprises 193 residues: Acyl carrier protein phosphodiesterase (193 aa).

It belongs to the AcpH family.

The enzyme catalyses holo-[ACP] + H2O = apo-[ACP] + (R)-4'-phosphopantetheine + H(+). Converts holo-ACP to apo-ACP by hydrolytic cleavage of the phosphopantetheine prosthetic group from ACP. This is Acyl carrier protein phosphodiesterase from Escherichia coli O139:H28 (strain E24377A / ETEC).